Here is a 439-residue protein sequence, read N- to C-terminus: Cysteine--tRNA ligase (439 aa).

Cys-26 provides a ligand contact to Zn(2+). The 'HIGH' region motif lies at 28–38 (PTVYNHVHIGN). Residues Cys-206, His-231, and Glu-235 each contribute to the Zn(2+) site. The 'KMSKS' region signature appears at 263–267 (KMSKS). Lys-266 serves as a coordination point for ATP.

The protein belongs to the class-I aminoacyl-tRNA synthetase family. As to quaternary structure, monomer. The cofactor is Zn(2+).

The protein resides in the cytoplasm. It carries out the reaction tRNA(Cys) + L-cysteine + ATP = L-cysteinyl-tRNA(Cys) + AMP + diphosphate. This is Cysteine--tRNA ligase from Malacoplasma penetrans (strain HF-2) (Mycoplasma penetrans).